The sequence spans 539 residues: uncharacterized protein (539 aa).

The interval 316-433 (AEHHHQKGKK…ATVERSSPPE (118 aa)) is disordered. A compositionally biased stretch (basic residues) spans 318–352 (HHHQKGKKVPATHRRSSTPHARKTAGTRARTRARK). A compositionally biased stretch (basic and acidic residues) spans 362–384 (KISKKDSGESKQKDETAGMERVF). Residues 390 to 402 (NVRTCSSRASRTG) are compositionally biased toward polar residues.

This is an uncharacterized protein from Treponema pallidum (strain Nichols).